Here is a 134-residue protein sequence, read N- to C-terminus: Small ribosomal subunit protein uS12 (134 aa).

The tract at residues methionine 1–serine 26 is disordered. Basic and acidic residues predominate over residues lysine 10 to lysine 20. Aspartate 89 is subject to 3-methylthioaspartic acid. The interval aspartate 103–lysine 134 is disordered. Over residues threonine 111 to lysine 123 the composition is skewed to basic residues. A compositionally biased stretch (low complexity) spans proline 124–lysine 134.

Belongs to the universal ribosomal protein uS12 family. In terms of assembly, part of the 30S ribosomal subunit. Contacts proteins S8 and S17. May interact with IF1 in the 30S initiation complex.

Its function is as follows. With S4 and S5 plays an important role in translational accuracy. Interacts with and stabilizes bases of the 16S rRNA that are involved in tRNA selection in the A site and with the mRNA backbone. Located at the interface of the 30S and 50S subunits, it traverses the body of the 30S subunit contacting proteins on the other side and probably holding the rRNA structure together. The combined cluster of proteins S8, S12 and S17 appears to hold together the shoulder and platform of the 30S subunit. The sequence is that of Small ribosomal subunit protein uS12 from Porphyromonas gingivalis (strain ATCC BAA-308 / W83).